The chain runs to 123 residues: MHLVYIAIFGALGCLSRFMVSGWVYALIGRALPYGTLAVNVIGSLLLGLLMEGGLRSAALPADIRMGITTGFMGGFTTFSTFSYETVRLLEDGSMVAAGANILLNVTVSVVFAGLGIFLARQL.

Helical transmembrane passes span 4–24 (VYIA…SGWV), 31–51 (ALPY…GLLM), 64–83 (IRMG…STFS), and 100–120 (ANIL…IFLA). Residues G74 and T77 each coordinate Na(+).

The protein belongs to the fluoride channel Fluc/FEX (TC 1.A.43) family.

The protein localises to the cell inner membrane. It catalyses the reaction fluoride(in) = fluoride(out). Na(+) is not transported, but it plays an essential structural role and its presence is essential for fluoride channel function. Fluoride-specific ion channel. Important for reducing fluoride concentration in the cell, thus reducing its toxicity. In Syntrophotalea carbinolica (strain DSM 2380 / NBRC 103641 / GraBd1) (Pelobacter carbinolicus), this protein is Fluoride-specific ion channel FluC.